We begin with the raw amino-acid sequence, 264 residues long: Phosphatidylglycerol--prolipoprotein diacylglyceryl transferase (264 aa).

A run of 7 helical transmembrane segments spans residues 14 to 34, 57 to 77, 89 to 109, 127 to 147, 176 to 196, 202 to 222, and 235 to 255; these read VGPL…LLFM, LLLY…VLFF, ILAI…VLVA, FIAP…FING, QLYQ…VYSA, KAVS…AEFF, and LGLS…VGLL. Arg140 provides a ligand contact to a 1,2-diacyl-sn-glycero-3-phospho-(1'-sn-glycerol).

It belongs to the Lgt family.

The protein resides in the cell inner membrane. It catalyses the reaction L-cysteinyl-[prolipoprotein] + a 1,2-diacyl-sn-glycero-3-phospho-(1'-sn-glycerol) = an S-1,2-diacyl-sn-glyceryl-L-cysteinyl-[prolipoprotein] + sn-glycerol 1-phosphate + H(+). It functions in the pathway protein modification; lipoprotein biosynthesis (diacylglyceryl transfer). Its function is as follows. Catalyzes the transfer of the diacylglyceryl group from phosphatidylglycerol to the sulfhydryl group of the N-terminal cysteine of a prolipoprotein, the first step in the formation of mature lipoproteins. This is Phosphatidylglycerol--prolipoprotein diacylglyceryl transferase from Aromatoleum aromaticum (strain DSM 19018 / LMG 30748 / EbN1) (Azoarcus sp. (strain EbN1)).